The chain runs to 448 residues: Asparagine--tRNA ligase (448 aa).

This sequence belongs to the class-II aminoacyl-tRNA synthetase family. As to quaternary structure, homodimer.

The protein localises to the cytoplasm. It carries out the reaction tRNA(Asn) + L-asparagine + ATP = L-asparaginyl-tRNA(Asn) + AMP + diphosphate + H(+). The polypeptide is Asparagine--tRNA ligase (Streptococcus agalactiae serotype Ia (strain ATCC 27591 / A909 / CDC SS700)).